A 375-amino-acid chain; its full sequence is Trans-enoyl reductase iccB (375 aa).

48-51 (VDAK) is an NADP(+) binding site. Position 143–150 (143–150 (AAVATVGL)) interacts with substrate. Residues 204 to 207 (SSAS), Y222, and 269 to 270 (LD) each bind NADP(+). 289 to 293 (TYSQF) provides a ligand contact to substrate. NADP(+) is bound at residue 358–359 (IK).

The protein belongs to the zinc-containing alcohol dehydrogenase family. As to quaternary structure, monomer.

It catalyses the reaction N-[(4E,6E,10S,12Z,14E)-6,10-dimethyl-3-oxohexadeca-4,6,12,14-tetraenoyl]-L-tyrosyl-[ACP] = (3E,5S)-3-[(2E,4E,8S,10E,12Z)-1-hydroxy-4,8-dimethyltetradeca-2,4,10,12-tetraen-1-ylidene]-5-[(4-hydroxyphenyl)methyl]pyrrolidine-2,4-dione + holo-[ACP] + H(+). The protein operates within mycotoxin biosynthesis. Its function is as follows. Trans-enoyl reductase; part of the gene cluster that mediates the biosynthesis of ilicicolin H, a 4-hydroxy-2-pyridonealkaloid that has potent and broad antifungal activities by inhibiting the mitochondrial respiration chain. IccB collaborates with the hybrid PKS-NRPS synthetase iccA to assemble the backbone of ilicicolin H. The PKS portion of iccA and trans-acting enoyl reductase iccB work together to construct an octaketide, and two methyl groups are introduced by the MT domain of iccA during the chain assembly. The nascent chain is then condensed with tyrosine, catalyzed by the iliA C domain, and the resulting PKS-NRPS hybrid is offloaded by the iliA RED domain to form an advanced tetramic acid intermediate. The biosynthesis of ilicicolin H starts with formation of the tetramic acid by the hybrid PKS-NRPS synthetase iccA with the partnering trans-enoyl reductase iccB since iccA lacks a designated enoylreductase (ER) domain. The cytochrome P450 monooxygenase iccC then catalyzes the ring expansion of the tetramate to the acyclic 2-pyridone. The pericyclase iccD further converts the acyclic 2-pyridone into 8-epi-ilicicolin H. Finally, the epimerase iccE converts 8-epi-ilicicolin H into ilicicolin H via epimerization. IccA to iccE are sufficient for ilicicolin H biosynthesis and the roles of the remaining enzymes, iccF, iccG and iccH within the pathway have still to be determined. This is Trans-enoyl reductase iccB from Talaromyces variabilis (Penicillium variabile).